Consider the following 295-residue polypeptide: Pyridoxal 5'-phosphate synthase subunit PdxS (295 aa).

Aspartate 25 contributes to the D-ribose 5-phosphate binding site. The active-site Schiff-base intermediate with D-ribose 5-phosphate is the lysine 82. Glycine 154 contributes to the D-ribose 5-phosphate binding site. Arginine 166 is a D-glyceraldehyde 3-phosphate binding site. D-ribose 5-phosphate is bound by residues glycine 215 and 236–237; that span reads GS.

This sequence belongs to the PdxS/SNZ family. As to quaternary structure, in the presence of PdxT, forms a dodecamer of heterodimers.

It carries out the reaction aldehydo-D-ribose 5-phosphate + D-glyceraldehyde 3-phosphate + L-glutamine = pyridoxal 5'-phosphate + L-glutamate + phosphate + 3 H2O + H(+). It functions in the pathway cofactor biosynthesis; pyridoxal 5'-phosphate biosynthesis. Its function is as follows. Catalyzes the formation of pyridoxal 5'-phosphate from ribose 5-phosphate (RBP), glyceraldehyde 3-phosphate (G3P) and ammonia. The ammonia is provided by the PdxT subunit. Can also use ribulose 5-phosphate and dihydroxyacetone phosphate as substrates, resulting from enzyme-catalyzed isomerization of RBP and G3P, respectively. The chain is Pyridoxal 5'-phosphate synthase subunit PdxS from Actinobacillus pleuropneumoniae serotype 5b (strain L20).